We begin with the raw amino-acid sequence, 269 residues long: Type II iodothyronine deiodinase (269 aa).

At 1 to 7 (MGLLSVD) the chain is on the lumenal side. The chain crosses the membrane as a helical; Signal-anchor for type III membrane protein span at residues 8–28 (LLITLQILPWFFSNCLFLALY). Topologically, residues 29 to 269 (DSVVLLKHVI…RUVPTCELIM (241 aa)) are cytoplasmic. Sec128 is an active-site residue. Non-standard amino acids (selenocysteine) are located at Sec128 and Sec261.

Belongs to the iodothyronine deiodinase family. In terms of assembly, predominantly monomer. Can form homodimers but homodimerization is not essential for enzyme activity.

It is found in the endoplasmic reticulum membrane. It catalyses the reaction 3,3',5-triiodo-L-thyronine + iodide + A + H(+) = L-thyroxine + AH2. The catalysed reaction is 3,3'-diiodo-L-thyronine + iodide + A + H(+) = 3,3',5'-triiodo-L-thyronine + AH2. The enzyme catalyses 3'-iodo-L-thyronine + iodide + A + H(+) = 3',5'-diiodo-L-thyronine + AH2. It carries out the reaction 3,3'-diiodothyronamine + iodide + A + H(+) = 3,3',5'-triiodothyronamine + AH2. It catalyses the reaction 3'-iodothyronamine + iodide + A + H(+) = 3',5'-diiodothyronamine + AH2. Functionally, plays a crucial role in the metabolism of thyroid hormones (TH) and has specific roles in TH activation and inactivation by deiodination. Catalyzes the deiodination of L-thyroxine (T4) to 3,5,3'-triiodothyronine (T3), 3,3',5'-triiodothyronine (rT3) to 3,3'-diiodothyronine (3,3'-T2) and 3',5'-diiodothyronine (3',5'-T2) to 3'-monoiodothyronine (3'-T1) via outer-ring deiodination (ORD). Catalyzes the phenolic ring deiodinations of 3,3',5'-triiodothyronamine and 3',5'- diiodothyronamine. The sequence is that of Type II iodothyronine deiodinase (dio2) from Neoceratodus forsteri (Australian lungfish).